The following is a 360-amino-acid chain: Phospho-N-acetylmuramoyl-pentapeptide-transferase (360 aa).

Transmembrane regions (helical) follow at residues 26–46 (GVLA…FFIA), 70–90 (GTPT…TLLW), 94–114 (GNPL…IGFV), 136–156 (LQSL…SNPV), 164–184 (FIPH…YFVI), 199–219 (GLAI…AYVS), 236–256 (SGQM…FLWF), 263–283 (VFMG…VAIV), 289–309 (VLFI…IQVV), and 339–359 (AVRF…SLKI).

Belongs to the glycosyltransferase 4 family. MraY subfamily. Mg(2+) is required as a cofactor.

It is found in the cell inner membrane. It carries out the reaction UDP-N-acetyl-alpha-D-muramoyl-L-alanyl-gamma-D-glutamyl-meso-2,6-diaminopimeloyl-D-alanyl-D-alanine + di-trans,octa-cis-undecaprenyl phosphate = di-trans,octa-cis-undecaprenyl diphospho-N-acetyl-alpha-D-muramoyl-L-alanyl-D-glutamyl-meso-2,6-diaminopimeloyl-D-alanyl-D-alanine + UMP. It participates in cell wall biogenesis; peptidoglycan biosynthesis. Catalyzes the initial step of the lipid cycle reactions in the biosynthesis of the cell wall peptidoglycan: transfers peptidoglycan precursor phospho-MurNAc-pentapeptide from UDP-MurNAc-pentapeptide onto the lipid carrier undecaprenyl phosphate, yielding undecaprenyl-pyrophosphoryl-MurNAc-pentapeptide, known as lipid I. This chain is Phospho-N-acetylmuramoyl-pentapeptide-transferase, found in Acidithiobacillus ferrooxidans (strain ATCC 23270 / DSM 14882 / CIP 104768 / NCIMB 8455) (Ferrobacillus ferrooxidans (strain ATCC 23270)).